The sequence spans 124 residues: uncharacterized protein (124 aa).

A disordered region spans residues 44 to 92; sequence DRVENSGNGTGSISAPLTDLGPSIGDSHENKGADIPIHPPLDTQSHAKD. Residues 48-58 show a composition bias toward polar residues; it reads NSGNGTGSISA.

This is an uncharacterized protein from Caenorhabditis elegans.